A 962-amino-acid polypeptide reads, in one-letter code: Glycine dehydrogenase (decarboxylating) (962 aa).

K709 bears the N6-(pyridoxal phosphate)lysine mark.

The protein belongs to the GcvP family. In terms of assembly, the glycine cleavage system is composed of four proteins: P, T, L and H. Pyridoxal 5'-phosphate serves as cofactor.

The catalysed reaction is N(6)-[(R)-lipoyl]-L-lysyl-[glycine-cleavage complex H protein] + glycine + H(+) = N(6)-[(R)-S(8)-aminomethyldihydrolipoyl]-L-lysyl-[glycine-cleavage complex H protein] + CO2. The glycine cleavage system catalyzes the degradation of glycine. The P protein binds the alpha-amino group of glycine through its pyridoxal phosphate cofactor; CO(2) is released and the remaining methylamine moiety is then transferred to the lipoamide cofactor of the H protein. This Shewanella sediminis (strain HAW-EB3) protein is Glycine dehydrogenase (decarboxylating).